The sequence spans 173 residues: Streptothricin acetyltransferase A (173 aa).

Residues 21–173 (VVFGRMIPAF…EIAIFWYYKF (153 aa)) enclose the N-acetyltransferase domain.

Belongs to the acetyltransferase family. GNAT subfamily. As to quaternary structure, homodimer.

It catalyses the reaction streptothricin D + acetyl-CoA = N(beta)-acetylstreptothricin D + CoA + H(+). The enzyme catalyses streptothricin F + acetyl-CoA = N(beta)-acetylstreptothricin F + CoA + H(+). Functionally, involved in resistance to streptothricin, a broad-spectrum antibiotic produced by streptomycetes. Detoxifies streptothricin via acetylation of the beta amino group of the first beta-lysyl moiety of streptothricin. The chain is Streptothricin acetyltransferase A from Bacillus subtilis (strain 168).